Here is a 591-residue protein sequence, read N- to C-terminus: Paxillin (591 aa).

At methionine 1 the chain carries N-acetylmethionine. The short motif at 3–15 is the LD motif 1 element; that stretch reads DLDALLADLESTT. The segment at 17–139 is disordered; that stretch reads HISKRPVFLS…SPTVMSSSLG (123 aa). The residue at position 31 (tyrosine 31) is a Phosphotyrosine; by PTK6. A compositionally biased stretch (pro residues) spans 45-54; it reads VPPPVPPPPS. A Phosphoserine modification is found at serine 83. Tyrosine 88 is modified (phosphotyrosine). Over residues 89-99 the composition is skewed to low complexity; that stretch reads SSSAKNSSASN. Serine 106 bears the Phosphoserine mark. Tyrosine 118 is modified (phosphotyrosine; by PTK6). Phosphoserine is present on residues serine 119, serine 126, and serine 130. The segment covering 121-137 has biased composition (polar residues); sequence PNKQKSAEPSPTVMSSS. The residue at position 132 (threonine 132) is a Phosphothreonine. Serine 137, serine 140, and serine 143 each carry phosphoserine. An LD motif 2 motif is present at residues 144 to 156; it reads ELDRLLLELNAVQ. The disordered stretch occupies residues 156–261; it reads QHSPPGFPAD…QQQTRISASS (106 aa). Tyrosine 181 carries the post-translational modification Phosphotyrosine. The LD motif 3 motif lies at 216–228; it reads SVESLLDELESSV. Phosphoserine is present on serine 230. The span at 236-261 shows a compositional bias: polar residues; that stretch reads TVNQGEMSSPQRVTSSQQQTRISASS. Serine 244 bears the Phosphoserine; by CDK5 mark. A phosphoserine mark is found at serine 250, serine 258, serine 261, serine 272, serine 303, serine 322, serine 332, and serine 340. The interval 262-315 is required for binding to PARVA and ILK; that stretch reads ATRELDELMASLSDFKMQGLEQRVDGERPWAAGWPPSSRQSSPEGQDEGGFMAQ. An LD motif 4 motif is present at residues 265–276; it reads ELDELMASLSDF. Residues 289-338 form a disordered region; it reads RPWAAGWPPSSRQSSPEGQDEGGFMAQGKTGSSSPPGGLSKPGSQLDSML. Positions 315-334 are enriched in low complexity; that stretch reads QGKTGSSSPPGGLSKPGSQL. Residues 333–345 carry the LD motif 5 motif; the sequence is QLDSMLGSLQSDL. LIM zinc-binding domains lie at 356–415, 416–473, 474–533, and 534–591; these read GVCG…LFSP, RCYY…DMFA, PKCG…RRGS, and LCSG…KLFC. Serine 533 is subject to Phosphoserine.

This sequence belongs to the paxillin family. As to quaternary structure, interacts in vitro with VCL/vinculin as well as to the SH3 domain of SRC and, when tyrosine phosphorylated, to the SH2 domain of CRK. Interacts with GIT1. Interacts with NUDT16L1/SDOS. Interacts with PTK2/FAK1. Interacts with PTK2B/PYK2. Interacts with ASAP2. Interacts with unphosphorylated ITGA4. Interacts with RNF5. Interacts with PDCD10. Interacts with NEK3, the interaction is prolactin-dependent. Interacts with PTK6. Interacts with TGFB1I1. Interacts with SORBS1. Interacts with PARVB. Interacts (via LD motif 4) with PARVA/PARVIN. Interacts (via LD motif 4) with ILK. Interacts (via cytoplasmic domain) with CEACAM1; the interaction is phosphotyrosyl-dependent. Interacts with LIMA1; this complex stabilizes actin dynamics. Interacts with CD36 (via C-terminus). Interacts with TRIM15. Interacts with PAK4; PAK4 acts as a scaffold to suppport PAXI phosphorylation at Ser-272. In terms of processing, phosphorylated by MAPK1/ERK2. Phosphorylated on tyrosine residues during integrin-mediated cell adhesion, embryonic development, fibroblast transformation and following stimulation of cells by mitogens. Phosphorylation at Ser-244 by CDK5 reduces its interaction with PTK2/FAK1 in matrix-cell focal adhesions (MCFA) during oligodendrocytes (OLs) differentiation. Phosphorylation at Tyr-31 and Tyr-118 by PTK6 promote the activation of RAC1 via CRK/CrKII, thereby promoting migration and invasion. Phosphorylation at Ser-250 by SLK is required for PXN redistribution and cell motility. Phosphorylation at Ser-272 promotes focal adhesion disassembly during cell migration.

It localises to the cytoplasm. The protein localises to the cytoskeleton. It is found in the cell junction. Its subcellular location is the focal adhesion. The protein resides in the cell cortex. Cytoskeletal protein involved in actin-membrane attachment at sites of cell adhesion to the extracellular matrix (focal adhesion). Recruits other proteins such as TRIM15 to focal adhesion. The chain is Paxillin from Mus musculus (Mouse).